The primary structure comprises 249 residues: Methylthioribulose-1-phosphate dehydratase (249 aa).

Zn(2+)-binding residues include His103 and His105.

This sequence belongs to the aldolase class II family. MtnB subfamily. The cofactor is Zn(2+).

It catalyses the reaction 5-(methylsulfanyl)-D-ribulose 1-phosphate = 5-methylsulfanyl-2,3-dioxopentyl phosphate + H2O. It participates in amino-acid biosynthesis; L-methionine biosynthesis via salvage pathway; L-methionine from S-methyl-5-thio-alpha-D-ribose 1-phosphate: step 2/6. In terms of biological role, catalyzes the dehydration of methylthioribulose-1-phosphate (MTRu-1-P) into 2,3-diketo-5-methylthiopentyl-1-phosphate (DK-MTP-1-P). This chain is Methylthioribulose-1-phosphate dehydratase, found in Leptospira interrogans serogroup Icterohaemorrhagiae serovar copenhageni (strain Fiocruz L1-130).